Reading from the N-terminus, the 222-residue chain is Glutathione S-transferase U21 (222 aa).

Residues 3-83 (AEVILLGFWP…YIDEVWSDNN (81 aa)) enclose the GST N-terminal domain. Glutathione-binding positions include 13 to 14 (SM), 40 to 41 (NK), 54 to 55 (TI), and 67 to 68 (ES). The 123-residue stretch at 89 to 211 (DPYHRAQALF…LPDSEKVVGY (123 aa)) folds into the GST C-terminal domain.

The protein belongs to the GST superfamily. Tau family.

It is found in the cytoplasm. Its subcellular location is the cytosol. The enzyme catalyses RX + glutathione = an S-substituted glutathione + a halide anion + H(+). Its function is as follows. May be involved in the conjugation of reduced glutathione to a wide number of exogenous and endogenous hydrophobic electrophiles and have a detoxification role against certain herbicides. This is Glutathione S-transferase U21 (GSTU21) from Arabidopsis thaliana (Mouse-ear cress).